The chain runs to 479 residues: Cobyric acid synthase (479 aa).

One can recognise a GATase cobBQ-type domain in the interval 250-442; it reads TRTVAVVAYP…LHGLFEDAAA (193 aa). Catalysis depends on Cys331, which acts as the Nucleophile. His434 is an active-site residue.

It belongs to the CobB/CobQ family. CobQ subfamily.

It participates in cofactor biosynthesis; adenosylcobalamin biosynthesis. Its function is as follows. Catalyzes amidations at positions B, D, E, and G on adenosylcobyrinic A,C-diamide. NH(2) groups are provided by glutamine, and one molecule of ATP is hydrogenolyzed for each amidation. The protein is Cobyric acid synthase of Variovorax paradoxus (strain S110).